A 37-amino-acid chain; its full sequence is Large ribosomal subunit protein bL36 (37 aa).

It belongs to the bacterial ribosomal protein bL36 family.

This is Large ribosomal subunit protein bL36 from Synechococcus elongatus (strain ATCC 33912 / PCC 7942 / FACHB-805) (Anacystis nidulans R2).